We begin with the raw amino-acid sequence, 245 residues long: uncharacterized protein (245 aa).

Residues 29-96 (RSLIEATFQR…AQRGFHVTPM (68 aa)) form the HTH gntR-type domain. A DNA-binding region (H-T-H motif) is located at residues 56–75 (IEDLKSRYEVSGGTVREALS).

This is an uncharacterized protein from Paraburkholderia xenovorans (strain LB400).